We begin with the raw amino-acid sequence, 432 residues long: UPF0597 protein APL_1605 (432 aa).

This sequence belongs to the UPF0597 family.

This is UPF0597 protein APL_1605 from Actinobacillus pleuropneumoniae serotype 5b (strain L20).